A 482-amino-acid chain; its full sequence is Class E basic helix-loop-helix protein 41 (482 aa).

Lys31 is covalently cross-linked (Glycyl lysine isopeptide (Lys-Gly) (interchain with G-Cter in SUMO2)). Positions 44–99 constitute a bHLH domain; the sequence is TYKLPHRLIEKKRRDRINECIAQLKDLLPEHLKLTTLGHLEKAVVLELTLKHLKAL. The segment at 67–71 is necessary for interaction with RXRA and repressor activity towards RXRA; the sequence is LKDLL. Lys121 participates in a covalent cross-link: Glycyl lysine isopeptide (Lys-Gly) (interchain with G-Cter in SUMO2). Residues 131–166 form the Orange domain; that stretch reads FHSGFQTCAKEVLQYLSRFESWTPREPRCVQLINHL. A Glycyl lysine isopeptide (Lys-Gly) (interchain with G-Cter in SUMO2) cross-link involves residue Lys210. 2 disordered regions span residues 228 to 298 and 438 to 482; these read AELA…GGAA and VAPL…KEAP. Residues 246 to 256 show a composition bias toward basic and acidic residues; sequence AEARPDREKGK. A Glycyl lysine isopeptide (Lys-Gly) (interchain with G-Cter in SUMO2) cross-link involves residue Lys266. Gly residues predominate over residues 285–297; sequence RGGGSGGGPGGGA.

As to quaternary structure, homodimer. Heterodimer with BHLHE40/DEC1. Interacts with CIART and BMAL1. Interacts with RXRA. Interacts with NR0B2 and HNF1A. As to expression, highly expressed in skeletal muscle and brain, moderately expressed in pancreas and heart, weakly expressed in placenta, lung, liver and kidney.

The protein resides in the nucleus. Transcriptional repressor involved in the regulation of the circadian rhythm by negatively regulating the activity of the clock genes and clock-controlled genes. Acts as the negative limb of a novel autoregulatory feedback loop (DEC loop) which differs from the one formed by the PER and CRY transcriptional repressors (PER/CRY loop). Both these loops are interlocked as it represses the expression of PER1 and in turn is repressed by PER1/2 and CRY1/2. Represses the activity of the circadian transcriptional activator: CLOCK-BMAL1 heterodimer by competing for the binding to E-box elements (5'-CACGTG-3') found within the promoters of its target genes. Negatively regulates its own expression and the expression of DBP and BHLHE41/DEC2. Acts as a corepressor of RXR and the RXR-LXR heterodimers and represses the ligand-induced RXRA/B/G, NR1H3/LXRA, NR1H4 and VDR transactivation activity. Inhibits HNF1A-mediated transactivation of CYP1A2, CYP2E1 AND CYP3A11. The polypeptide is Class E basic helix-loop-helix protein 41 (Homo sapiens (Human)).